The sequence spans 297 residues: Bifunctional protein FolD (297 aa).

Residues 164–166 (GRS), S193, and I234 each bind NADP(+).

It belongs to the tetrahydrofolate dehydrogenase/cyclohydrolase family. Homodimer.

It catalyses the reaction (6R)-5,10-methylene-5,6,7,8-tetrahydrofolate + NADP(+) = (6R)-5,10-methenyltetrahydrofolate + NADPH. The catalysed reaction is (6R)-5,10-methenyltetrahydrofolate + H2O = (6R)-10-formyltetrahydrofolate + H(+). Its pathway is one-carbon metabolism; tetrahydrofolate interconversion. In terms of biological role, catalyzes the oxidation of 5,10-methylenetetrahydrofolate to 5,10-methenyltetrahydrofolate and then the hydrolysis of 5,10-methenyltetrahydrofolate to 10-formyltetrahydrofolate. In Halobacterium salinarum (strain ATCC 700922 / JCM 11081 / NRC-1) (Halobacterium halobium), this protein is Bifunctional protein FolD.